Consider the following 204-residue polypeptide: Prephenate decarboxylase (204 aa).

This sequence belongs to the prephenate decarboxylase family.

The protein resides in the cytoplasm. It carries out the reaction prephenate + H(+) = 3-[(4R)-4-hydroxycyclohexa-1,5-dien-1-yl]-2-oxopropanoate + CO2. It functions in the pathway antibiotic biosynthesis; bacilysin biosynthesis. In terms of biological role, part of the bacABCDEF operon responsible for the biosynthesis of the nonribosomally synthesized dipeptide antibiotic bacilysin, composed of L-alanine and L-anticapsin. Bacilysin is an irreversible inactivator of the glutaminase domain of glucosamine synthetase. BacA is an unusual prephenate decarboxylase that avoids the typical aromatization of the cyclohexadienol ring of prephenate. BacA catalyzes the protonation of prephenate (1-carboxy-4-hydroxy-alpha-oxo-2,5-cyclohexadiene-1-propanoic acid) at C6 position, followed by a decarboxylation to produce the endocyclic-delta(4),delta(8)-7R-dihydro-hydroxyphenylpyruvate (en-H2HPP). En-H2HPP is able to undergo a slow nonenzymatic isomerization to produce the exocyclic-delta(3),delta(5)-dihydro-hydroxyphenylpyruvate (ex-H2HPP). BacA isomerizes only the pro-R double bond in prephenate. The chain is Prephenate decarboxylase from Bacillus amyloliquefaciens (Bacillus velezensis).